Reading from the N-terminus, the 163-residue chain is Protein YtsP (163 aa).

The protein belongs to the free Met sulfoxide reductase family.

This Bacillus subtilis (strain 168) protein is Protein YtsP (ytsP).